The primary structure comprises 95 residues: Aspartyl/glutamyl-tRNA(Asn/Gln) amidotransferase subunit C (95 aa).

It belongs to the GatC family. Heterotrimer of A, B and C subunits.

It catalyses the reaction L-glutamyl-tRNA(Gln) + L-glutamine + ATP + H2O = L-glutaminyl-tRNA(Gln) + L-glutamate + ADP + phosphate + H(+). It carries out the reaction L-aspartyl-tRNA(Asn) + L-glutamine + ATP + H2O = L-asparaginyl-tRNA(Asn) + L-glutamate + ADP + phosphate + 2 H(+). In terms of biological role, allows the formation of correctly charged Asn-tRNA(Asn) or Gln-tRNA(Gln) through the transamidation of misacylated Asp-tRNA(Asn) or Glu-tRNA(Gln) in organisms which lack either or both of asparaginyl-tRNA or glutaminyl-tRNA synthetases. The reaction takes place in the presence of glutamine and ATP through an activated phospho-Asp-tRNA(Asn) or phospho-Glu-tRNA(Gln). This chain is Aspartyl/glutamyl-tRNA(Asn/Gln) amidotransferase subunit C, found in Shouchella clausii (strain KSM-K16) (Alkalihalobacillus clausii).